Here is a 632-residue protein sequence, read N- to C-terminus: Epsin-3 (632 aa).

Residues Arg-8, Lys-11, Arg-25, Asn-30, Arg-63, and His-73 each contribute to the a 1,2-diacyl-sn-glycero-3-phospho-(1D-myo-inositol-4,5-bisphosphate) site. One can recognise an ENTH domain in the interval 12–144 (NIVHNYSEAE…KDEERLRQER (133 aa)). Residues 172 to 214 (YGEDYSRSRGSPSSYNSSSSSPRYTSDLEQARPQTSGEEELQL) form a disordered region. The segment covering 179-196 (SRGSPSSYNSSSSSPRYT) has biased composition (low complexity). Phosphoserine is present on residues Ser-191 and Ser-192. UIM domains lie at 209–228 (EEEL…AEKP) and 236–255 (DEDL…HEKE). The interval 257–296 (RSWQGDGSPMANGAGAVVHHQRDREPEREERKEEEKLKTS) is disordered. At Ser-264 the chain carries Phosphoserine. The segment covering 276-294 (HQRDREPEREERKEEEKLK) has biased composition (basic and acidic residues). 8 tandem repeats follow at residues 321–323 (DPW), 344–346 (DPW), 371–373 (EPW), 387–389 (DPW), 404–406 (DPW), 524–526 (NPF), 537–539 (NPF), and 629–631 (NPF). A 5 X 3 AA repeats of [DE]-P-W region spans residues 321 to 406 (DPWDIPGFRP…KLPSTGADPW (86 aa)). 3 disordered regions span residues 326 to 501 (PGFR…SFLG), 525 to 560 (PFLT…PALG), and 604 to 632 (AFAP…NPFL). The segment covering 353-371 (TVLSRSQPWDLTPMLSSSE) has biased composition (polar residues). The segment at 524 to 631 (NPFLTGLSAP…PPPQTGTNPF (108 aa)) is 3 X 3 AA repeats of N-P-F.

This sequence belongs to the epsin family. Detected in migrating keratinocytes from wounded skin, but not in differentiating keratinocytes or in normal skin. Detected in chronic wounds, basal cell carcinoma and ulcerative colitis.

Its subcellular location is the cytoplasm. It is found in the perinuclear region. The protein resides in the cytoplasmic vesicle. The protein localises to the clathrin-coated vesicle. It localises to the nucleus. The polypeptide is Epsin-3 (EPN3) (Homo sapiens (Human)).